The chain runs to 333 residues: Cysteine protease (333 aa).

A signal peptide spans 1–18; the sequence is MKFLLVAALCALVAIGSC. Positions 19-108 are cleaved as a propeptide — activation peptide; the sequence is KPTREEIKTF…MEAAKEPLIN (90 aa). Asparagine 93 carries N-linked (GlcNAc...) asparagine glycosylation. Cystine bridges form between cysteine 134–cysteine 182 and cysteine 168–cysteine 214. The active site involves cysteine 137. Active-site residues include histidine 281 and asparagine 301.

The protein belongs to the peptidase C1 family. As to quaternary structure, homodimer.

Cysteine protease. In Blomia tropicalis (Mite), this protein is Cysteine protease.